The following is a 135-amino-acid chain: Small ribosomal subunit protein uS9 (135 aa).

Residues 96 to 135 (SADNRKPLKTEGHLSRDPRAKERRKYGLKKARKAPQFSKR) form a disordered region. Over residues 97 to 115 (ADNRKPLKTEGHLSRDPRA) the composition is skewed to basic and acidic residues. Residues 116–135 (KERRKYGLKKARKAPQFSKR) show a composition bias toward basic residues.

It belongs to the universal ribosomal protein uS9 family.

The sequence is that of Small ribosomal subunit protein uS9 from Prochlorococcus marinus (strain MIT 9313).